Reading from the N-terminus, the 451-residue chain is UPF0210 protein Cbei_2352 (451 aa).

It belongs to the UPF0210 family. In terms of assembly, homodimer.

The protein is UPF0210 protein Cbei_2352 of Clostridium beijerinckii (strain ATCC 51743 / NCIMB 8052) (Clostridium acetobutylicum).